The primary structure comprises 243 residues: Interleukin-27 subunit alpha (243 aa).

Residues 1 to 28 form the signal peptide; sequence MGQTAGDLGWRLSLLLLPLLLVQAGVWG.

It belongs to the IL-6 superfamily. Heterodimer with EBI3; not disulfide-linked. This heterodimer is known as interleukin IL-27. O-glycosylated. As to expression, expressed in monocytes and in placenta.

It is found in the secreted. In terms of biological role, associates with EBI3 to form the IL-27 interleukin, a heterodimeric cytokine which functions in innate immunity. IL-27 has pro- and anti-inflammatory properties, that can regulate T-helper cell development, suppress T-cell proliferation, stimulate cytotoxic T-cell activity, induce isotype switching in B-cells, and that has diverse effects on innate immune cells. Among its target cells are CD4 T-helper cells which can differentiate in type 1 effector cells (TH1), type 2 effector cells (TH2) and IL17 producing helper T-cells (TH17). It drives rapid clonal expansion of naive but not memory CD4 T-cells. It also strongly synergizes with IL-12 to trigger interferon-gamma/IFN-gamma production of naive CD4 T-cells, binds to the cytokine receptor WSX-1/TCCR which appears to be required but not sufficient for IL-27-mediated signal transduction. IL-27 potentiate the early phase of TH1 response and suppress TH2 and TH17 differentiation. It induces the differentiation of TH1 cells via two distinct pathways, p38 MAPK/TBX21- and ICAM1/ITGAL/ERK-dependent pathways. It also induces STAT1, STAT3, STAT4 and STAT5 phosphorylation and activates TBX21/T-Bet via STAT1 with resulting IL12RB2 up-regulation, an event crucial to TH1 cell commitment. It suppresses the expression of GATA3, the inhibitor TH1 cells development. In CD8 T-cells, it activates STATs as well as GZMB. IL-27 reveals to be a potent inhibitor of TH17 cell development and of IL-17 production. Indeed IL27 alone is also able to inhibit the production of IL17 by CD4 and CD8 T-cells. While IL-27 suppressed the development of pro-inflammatory Th17 cells via STAT1, it inhibits the development of anti-inflammatory inducible regulatory T-cells, iTreg, independently of STAT1. IL-27 also has an effect on cytokine production, it suppresses pro-inflammatory cytokine production such as IL2, IL4, IL5 and IL6 and activates suppressors of cytokine signaling such as SOCS1 and SOCS3. Apart from suppression of cytokine production, IL-27 also antagonizes the effects of some cytokines such as IL6 through direct effects on T-cells. Another important role of IL-27 is its antitumor activity as well as its antiangiogenic activity with activation of production of antiangiogenic chemokines such as IP-10/CXCL10 and MIG/CXCL9. In vein endothelial cells, it induces IRF1/interferon regulatory factor 1 and increase the expression of MHC class II transactivator/CIITA with resulting up-regulation of major histocompatibility complex class II. IL-27 also demonstrates antiviral activity with inhibitory properties on HIV-1 replication. The polypeptide is Interleukin-27 subunit alpha (IL27) (Homo sapiens (Human)).